The primary structure comprises 323 residues: tRNA dimethylallyltransferase (323 aa).

13–20 is a binding site for ATP; sequence GPTASGKT. Substrate is bound at residue 15 to 20; that stretch reads TASGKT. 4 interaction with substrate tRNA regions span residues 42–45, 166–170, 251–256, and 284–291; these read DSAL, QRIQR, RCVGYR, and KRQITWLR.

It belongs to the IPP transferase family. In terms of assembly, monomer. The cofactor is Mg(2+).

It catalyses the reaction adenosine(37) in tRNA + dimethylallyl diphosphate = N(6)-dimethylallyladenosine(37) in tRNA + diphosphate. Catalyzes the transfer of a dimethylallyl group onto the adenine at position 37 in tRNAs that read codons beginning with uridine, leading to the formation of N6-(dimethylallyl)adenosine (i(6)A). This Acidovorax ebreus (strain TPSY) (Diaphorobacter sp. (strain TPSY)) protein is tRNA dimethylallyltransferase.